A 105-amino-acid polypeptide reads, in one-letter code: MADGSGWQPPRPCESYRAEWKLCRSARHFVHHYYVHGERPACEQWQRDLASCRDWEERRSAEAQQSLCESERARVRAARKHILVWAPRQSPPPDWHLPLPQEKDE.

It belongs to the UPF0545 family. As to quaternary structure, interacts with RTN4 isoform A/Nogo-A; the interaction results in enhanced RTN4-mediated inhibition of AMPA receptor clustering. Also interacts with NCAM1, RANBP2 and CCT8. Rapidly degraded by proteolysis following neuronal stimulation, resulting in increased AMPA receptor clustering.

It is found in the synapse. Its subcellular location is the synaptic cleft. Functionally, negatively regulates long-term potentiation and modulates adult synaptic plasticity. Stabilizes the interaction of RTN4 isoform A/Nogo-A with its receptors, inhibiting clustering of postsynaptic AMPA receptors at synaptic sites. Upon neuronal stimulation, degraded at synapses, reducing RTN4 signaling and allowing AMPA receptor clustering at individual synapses. In Pongo abelii (Sumatran orangutan), this protein is Synaptic plasticity regulator PANTS.